A 164-amino-acid polypeptide reads, in one-letter code: 6,7-dimethyl-8-ribityllumazine synthase (164 aa).

Residues Tyr27, 58-60 (ALE), and 87-89 (CVI) contribute to the 5-amino-6-(D-ribitylamino)uracil site. Residue 92–93 (ET) coordinates (2S)-2-hydroxy-3-oxobutyl phosphate. His95 functions as the Proton donor in the catalytic mechanism. Asn120 serves as a coordination point for 5-amino-6-(D-ribitylamino)uracil. Arg134 lines the (2S)-2-hydroxy-3-oxobutyl phosphate pocket.

The protein belongs to the DMRL synthase family.

The catalysed reaction is (2S)-2-hydroxy-3-oxobutyl phosphate + 5-amino-6-(D-ribitylamino)uracil = 6,7-dimethyl-8-(1-D-ribityl)lumazine + phosphate + 2 H2O + H(+). The protein operates within cofactor biosynthesis; riboflavin biosynthesis; riboflavin from 2-hydroxy-3-oxobutyl phosphate and 5-amino-6-(D-ribitylamino)uracil: step 1/2. Catalyzes the formation of 6,7-dimethyl-8-ribityllumazine by condensation of 5-amino-6-(D-ribitylamino)uracil with 3,4-dihydroxy-2-butanone 4-phosphate. This is the penultimate step in the biosynthesis of riboflavin. This chain is 6,7-dimethyl-8-ribityllumazine synthase, found in Methylocella silvestris (strain DSM 15510 / CIP 108128 / LMG 27833 / NCIMB 13906 / BL2).